We begin with the raw amino-acid sequence, 207 residues long: Large ribosomal subunit protein uL4 (207 aa).

The segment at 53–85 (ERSDVARTGKKFGRQKGGGTARHGDRKAPIFIG) is disordered.

This sequence belongs to the universal ribosomal protein uL4 family. In terms of assembly, part of the 50S ribosomal subunit.

One of the primary rRNA binding proteins, this protein initially binds near the 5'-end of the 23S rRNA. It is important during the early stages of 50S assembly. It makes multiple contacts with different domains of the 23S rRNA in the assembled 50S subunit and ribosome. Its function is as follows. Forms part of the polypeptide exit tunnel. This Novosphingobium aromaticivorans (strain ATCC 700278 / DSM 12444 / CCUG 56034 / CIP 105152 / NBRC 16084 / F199) protein is Large ribosomal subunit protein uL4.